The chain runs to 305 residues: Pseudouridine-5'-phosphate glycosidase (305 aa).

The active-site Proton donor is Glu-22. Substrate contacts are provided by Lys-84 and Val-104. Asp-136 contributes to the Mn(2+) binding site. Residue Ser-138–Asp-140 coordinates substrate. Catalysis depends on Lys-157, which acts as the Nucleophile.

The protein belongs to the pseudouridine-5'-phosphate glycosidase family. As to quaternary structure, homotrimer. Requires Mn(2+) as cofactor.

The enzyme catalyses D-ribose 5-phosphate + uracil = psi-UMP + H2O. Catalyzes the reversible cleavage of pseudouridine 5'-phosphate (PsiMP) to ribose 5-phosphate and uracil. Functions biologically in the cleavage direction, as part of a pseudouridine degradation pathway. In Chloroflexus aurantiacus (strain ATCC 29364 / DSM 637 / Y-400-fl), this protein is Pseudouridine-5'-phosphate glycosidase.